A 480-amino-acid chain; its full sequence is NADH-quinone oxidoreductase subunit N (480 aa).

Helical transmembrane passes span 10–30 (FISI…ILIE), 40–60 (WSSL…WGGI), 80–100 (FFTV…TAFF), 117–137 (AVFG…FLGI), 166–186 (LMGS…YGAI), 208–228 (VLFF…AALV), 246–266 (TAFM…RLFF), 276–296 (WNQV…FVAL), 304–324 (FFAY…VIGN), 330–350 (ALTF…AVLA), 374–394 (LASL…TAGF), 409–431 (YYGL…LRII), and 452–472 (IVGT…APFL).

Belongs to the complex I subunit 2 family. NDH-1 is composed of 14 different subunits. Subunits NuoA, H, J, K, L, M, N constitute the membrane sector of the complex.

The protein localises to the cell inner membrane. The enzyme catalyses a quinone + NADH + 5 H(+)(in) = a quinol + NAD(+) + 4 H(+)(out). In terms of biological role, NDH-1 shuttles electrons from NADH, via FMN and iron-sulfur (Fe-S) centers, to quinones in the respiratory chain. The immediate electron acceptor for the enzyme in this species is believed to be ubiquinone. Couples the redox reaction to proton translocation (for every two electrons transferred, four hydrogen ions are translocated across the cytoplasmic membrane), and thus conserves the redox energy in a proton gradient. In Protochlamydia amoebophila (strain UWE25), this protein is NADH-quinone oxidoreductase subunit N.